The chain runs to 322 residues: MDPLSSVQPASYVGFDTITNQIEHRLLKKGFQFNIMVVGQSGLGKSTLINTLFASHLIDSATGDDISALPVTKTTEMKISTHTLVEDRVRLNINVIDTPGFGDFIDNSKAWEPIVKYIKEQHSQYLRKELTAQRERFITDTRVHAILYFLQPNGKELSRLDVEALKRLTEIANVIPVIGKSDTLTLDERTEFRELIQNEFEKYNFKIYPYDSEELTDEELELNRSVRSIIPFAVVGSENEIEINGETFRGRKTRWSAINVEDINQCDFVYLREFLIRTHLQDLIETTSYIHYEGFRARQLIALKENANSRSSAHMSSNAIQR.

At M1 the chain carries N-acetylmethionine. Residues 29 to 302 enclose the Septin-type G domain; sequence KGFQFNIMVV…EGFRARQLIA (274 aa). Residues 39-46 form a G1 motif region; sequence GQSGLGKS. GTP is bound by residues 39–46, T74, G100, and 180–188; these read GQSGLGKS and KSDTLTLDE. Positions 97–100 are G3 motif; that stretch reads DTPG. Positions 179 to 182 are G4 motif; that stretch reads GKSD. T216 bears the Phosphothreonine mark. Residues G236 and R251 each coordinate GTP.

Belongs to the TRAFAC class TrmE-Era-EngA-EngB-Septin-like GTPase superfamily. Septin GTPase family. Component of the septin complex which consists of CDC3, CDC10, CDC11, CDC12 and probably SHS1 and rearranges to a cortical collar of highly ordered filaments at the mother-bud-neck. A complex formed by CDC3, CDC10, CDC11 and CDC12 is capable of forming long filaments in vitro and the components seem to be present in a 2:2:2:2 arrangement in vivo. The filaments are proposed to be formed by the end-to-end polymerization of CDC3-CDC12-CDC11 complexes with CDC10 serving as a bridge to bundle the polymers into paired filaments. Component of the GIN4 complex composed of at least BNI5, CDC3, CDC10, CDC11, CDC12, GIN4, NAP1 and SHS1. Self-associates. Interacts with SYP1.

The protein resides in the membrane. Its subcellular location is the bud neck. In terms of biological role, septins are GTPases involved in cytokinesis that assemble early in the cell cycle as a patch at the incipient bud site and form a ring approximate 15 minutes before bud emergence, which transforms into an hour-glass shaped collar of cortical filaments that spans both sides of the mother-bud neck. This collar persists until just before cytokinesis, when it splits into two rings that occupy opposite sides of the neck. The septins at the bud neck serve as a structural scaffold that recruits different components involved in diverse processes at specific stages during the cell cycle. Many proteins bind asymmetrically to the septin collar. The septin assembly is regulated by protein kinases GIN4 and/or CLA4. May act by recruiting MYO1 and HOF1, a protein involved in septation, to the site of cleavage. Septins are also involved in cell morphogenesis, bud site selection, chitin deposition, cell cycle regulation, cell compartmentalization and spore wall formation. This chain is Cell division control protein 10 (CDC10), found in Saccharomyces cerevisiae (strain ATCC 204508 / S288c) (Baker's yeast).